Reading from the N-terminus, the 311-residue chain is Ornithine carbamoyltransferase (311 aa).

Residues 54–57 (STRT), glutamine 81, arginine 105, and 132–135 (HPCQ) each bind carbamoyl phosphate. Residues asparagine 164, aspartate 228, and 232 to 233 (SM) contribute to the L-ornithine site. Residues 268 to 269 (CL) and arginine 296 each bind carbamoyl phosphate.

It belongs to the aspartate/ornithine carbamoyltransferase superfamily. OTCase family.

Its subcellular location is the cytoplasm. It catalyses the reaction carbamoyl phosphate + L-ornithine = L-citrulline + phosphate + H(+). Its pathway is amino-acid biosynthesis; L-arginine biosynthesis; L-arginine from L-ornithine and carbamoyl phosphate: step 1/3. Reversibly catalyzes the transfer of the carbamoyl group from carbamoyl phosphate (CP) to the N(epsilon) atom of ornithine (ORN) to produce L-citrulline. The chain is Ornithine carbamoyltransferase from Renibacterium salmoninarum (strain ATCC 33209 / DSM 20767 / JCM 11484 / NBRC 15589 / NCIMB 2235).